We begin with the raw amino-acid sequence, 655 residues long: p-hydroxybenzoic acid efflux pump subunit AaeB (655 aa).

At 1–12 (MDIFSIANQHIR) the chain is on the periplasmic side. A helical membrane pass occupies residues 13–33 (FAVKLATAIVLALFVGFHFQL). The Cytoplasmic portion of the chain corresponds to 34-37 (ETPR). A helical membrane pass occupies residues 38 to 58 (WAVLTAAIVAAGPAFAAGGEP). The Periplasmic segment spans residues 59 to 68 (YSGAIRYRGF). The helical transmembrane segment at 69-89 (LRIIGTFIGCIAGLVIIIAMI) threads the bilayer. Over 90 to 92 (RAP) the chain is Cytoplasmic. A helical membrane pass occupies residues 93 to 113 (LLMILVCCIWAGFCTWISSLV). At 114 to 120 (RIENSYA) the chain is on the periplasmic side. The chain crosses the membrane as a helical span at residues 121-141 (WGLAGYTALIIVITIQPEPLL). Residues 142–151 (TPQFAVERCS) lie on the Cytoplasmic side of the membrane. A helical membrane pass occupies residues 152–172 (EIVIGIVCAIMADLLFSPRSI). The Periplasmic segment spans residues 173-369 (KQEVDRELES…RTTLSCILGT (197 aa)). Residues 370-390 (LFWLWTGWTSGSGAMVMIAVV) traverse the membrane as a helical segment. Over 391-406 (TSLAMRLPNPRMVAID) the chain is Cytoplasmic. The helical transmembrane segment at 407–427 (FIYGTLAALPLGLLYFLVIIP) threads the bilayer. Over 428-430 (NTQ) the chain is Periplasmic. The chain crosses the membrane as a helical span at residues 431-451 (QSMLLLCISLAVLGFFLGIEV). Topologically, residues 452 to 458 (QKRRLGS) are cytoplasmic. Residues 459-479 (MGALASTINIIVLDNPMTFHF) traverse the membrane as a helical segment. Residues 480 to 481 (SQ) lie on the Periplasmic side of the membrane. The chain crosses the membrane as a helical span at residues 482-502 (FLDSALGQIVGCVLAFTVILL). The Cytoplasmic segment spans residues 503–655 (VRDKSRDRTG…HKYQHALTDS (153 aa)).

It belongs to the aromatic acid exporter ArAE (TC 2.A.85) family.

It is found in the cell inner membrane. In terms of biological role, forms an efflux pump with AaeA. Could function as a metabolic relief valve, allowing to eliminate certain compounds when they accumulate to high levels in the cell. This is p-hydroxybenzoic acid efflux pump subunit AaeB from Escherichia coli O157:H7.